We begin with the raw amino-acid sequence, 314 residues long: Homoserine O-acetyltransferase (314 aa).

The active-site Acyl-thioester intermediate is the cysteine 142. Lysine 163 and serine 192 together coordinate substrate. Residue histidine 235 is the Proton acceptor of the active site. Glutamate 237 is a catalytic residue. Arginine 249 serves as a coordination point for substrate.

This sequence belongs to the MetA family.

It is found in the cytoplasm. It catalyses the reaction L-homoserine + acetyl-CoA = O-acetyl-L-homoserine + CoA. Its pathway is amino-acid biosynthesis; L-methionine biosynthesis via de novo pathway; O-acetyl-L-homoserine from L-homoserine: step 1/1. Functionally, transfers an acetyl group from acetyl-CoA to L-homoserine, forming acetyl-L-homoserine. The polypeptide is Homoserine O-acetyltransferase (Streptococcus pneumoniae serotype 4 (strain ATCC BAA-334 / TIGR4)).